A 202-amino-acid polypeptide reads, in one-letter code: Coiled-coil domain-containing protein mdt-28 (202 aa).

Acidic residues-rich tracts occupy residues 1–15 and 28–45; these read MFEE…EEQE and EDID…DDEY. The interval 1–83 is disordered; the sequence is MFEELDAEDG…NEDDEEPIEP (83 aa). Residues 159 to 184 adopt a coiled-coil conformation; sequence IEEENLDEAIERQETIIAAAREMLNS.

As to quaternary structure, interacts with mdt-6 and mdt-30. In terms of tissue distribution, ubiquitously expressed in tissues including epidermal, intestinal, pharyngeal and uterine, and is also expressed in vulval muscle cells and gut granules.

The protein resides in the nucleus. Its subcellular location is the cytoplasm. In terms of biological role, plays a role in normal growth and development. This chain is Coiled-coil domain-containing protein mdt-28, found in Caenorhabditis elegans.